We begin with the raw amino-acid sequence, 397 residues long: Elongation factor Tu (397 aa).

The tr-type G domain maps to 10–206 (KPHVNIGTIG…AVDENIPQPE (197 aa)). Residues 19–26 (GHVDHGKT) form a G1 region. 19-26 (GHVDHGKT) serves as a coordination point for GTP. A Mg(2+)-binding site is contributed by threonine 26. The interval 62–66 (GITIS) is G2. Residues 83-86 (DCPG) are G3. GTP contacts are provided by residues 83 to 87 (DCPGH) and 138 to 141 (NKAD). The segment at 138–141 (NKAD) is G4. Residues 176–178 (SAL) form a G5 region.

The protein belongs to the TRAFAC class translation factor GTPase superfamily. Classic translation factor GTPase family. EF-Tu/EF-1A subfamily. As to quaternary structure, monomer.

It is found in the cytoplasm. The enzyme catalyses GTP + H2O = GDP + phosphate + H(+). GTP hydrolase that promotes the GTP-dependent binding of aminoacyl-tRNA to the A-site of ribosomes during protein biosynthesis. This chain is Elongation factor Tu, found in Streptomyces cinnamoneus (Streptoverticillium cinnamoneum).